We begin with the raw amino-acid sequence, 217 residues long: Adr-2-binding protein 1 (217 aa).

Residues 33-65 (ARPEPQHDSLKRRNTTSSIAKKKAKMTRGDEQI) form a disordered region. Residues 44–58 (RRNTTSSIAKKKAKM) are compositionally biased toward basic residues.

In terms of assembly, interacts with double-stranded RNA-specific adenosine deaminase adr-2. As to expression, expressed in main body hypodermal cells, the hypodermal seam cells, pharynx, intestine and some neurons.

It is found in the nucleus. In terms of biological role, required for the A-I editing activity of the double-stranded RNA-specific adenosine deaminase adr-2 by facilitating adr-2 nuclear localization. This is Adr-2-binding protein 1 from Caenorhabditis elegans.